A 146-amino-acid chain; its full sequence is uncharacterized protein (146 aa).

The helical transmembrane segment at 6–26 (IPIFVISLSNISHIILAIFFF) threads the bilayer.

The protein localises to the membrane. This is an uncharacterized protein from Caenorhabditis elegans.